A 294-amino-acid chain; its full sequence is 4-hydroxy-tetrahydrodipicolinate synthase (294 aa).

A pyruvate-binding site is contributed by threonine 45. Tyrosine 133 acts as the Proton donor/acceptor in catalysis. Lysine 161 functions as the Schiff-base intermediate with substrate in the catalytic mechanism. Isoleucine 203 lines the pyruvate pocket.

Belongs to the DapA family. Homotetramer; dimer of dimers.

It is found in the cytoplasm. The catalysed reaction is L-aspartate 4-semialdehyde + pyruvate = (2S,4S)-4-hydroxy-2,3,4,5-tetrahydrodipicolinate + H2O + H(+). It functions in the pathway amino-acid biosynthesis; L-lysine biosynthesis via DAP pathway; (S)-tetrahydrodipicolinate from L-aspartate: step 3/4. Catalyzes the condensation of (S)-aspartate-beta-semialdehyde [(S)-ASA] and pyruvate to 4-hydroxy-tetrahydrodipicolinate (HTPA). The sequence is that of 4-hydroxy-tetrahydrodipicolinate synthase from Shewanella sp. (strain MR-4).